Here is a 277-residue protein sequence, read N- to C-terminus: MAIKKYKPTSNGRRNMTASDFAEITKSTPEKSLLAKKSKTGARNNSGRMTVRHHAGGHKQAYRLVDFKRIKDNTTATVKAIEYDPNRTANIALLVYEDGIKSYILAPKGLKVGDKVQSGPDADIKVGNALPLSNIPEGTLIHNIELKPGKGGQLARSAGTSAQILGKDGKYVIVRLTSGEVRLVLATNRATIGEVGNAEHSLINWGKAGRNRWRGKRPHVRGSVMNPNDHPHGGGEGKAPVGRPSPMSPWGKKTAGKKTRDKKKASTKFIVRGRKSK.

Residues R212 to K277 are disordered. Residues T254–K277 show a composition bias toward basic residues.

It belongs to the universal ribosomal protein uL2 family. Part of the 50S ribosomal subunit. Forms a bridge to the 30S subunit in the 70S ribosome.

In terms of biological role, one of the primary rRNA binding proteins. Required for association of the 30S and 50S subunits to form the 70S ribosome, for tRNA binding and peptide bond formation. It has been suggested to have peptidyltransferase activity; this is somewhat controversial. Makes several contacts with the 16S rRNA in the 70S ribosome. This is Large ribosomal subunit protein uL2 from Leuconostoc citreum (strain KM20).